Here is a 347-residue protein sequence, read N- to C-terminus: tRNA N6-adenosine threonylcarbamoyltransferase (347 aa).

Fe cation contacts are provided by H117 and H121. Substrate is bound by residues 140 to 144, D174, G187, D191, and N281; that span reads LVSGG. D309 contributes to the Fe cation binding site.

It belongs to the KAE1 / TsaD family. The cofactor is Fe(2+).

The protein resides in the cytoplasm. The catalysed reaction is L-threonylcarbamoyladenylate + adenosine(37) in tRNA = N(6)-L-threonylcarbamoyladenosine(37) in tRNA + AMP + H(+). In terms of biological role, required for the formation of a threonylcarbamoyl group on adenosine at position 37 (t(6)A37) in tRNAs that read codons beginning with adenine. Is involved in the transfer of the threonylcarbamoyl moiety of threonylcarbamoyl-AMP (TC-AMP) to the N6 group of A37, together with TsaE and TsaB. TsaD likely plays a direct catalytic role in this reaction. The polypeptide is tRNA N6-adenosine threonylcarbamoyltransferase (Thermobifida fusca (strain YX)).